Reading from the N-terminus, the 510-residue chain is Amidophosphoribosyltransferase (510 aa).

Residue cysteine 2 is the Nucleophile of the active site. The region spanning 2–239 is the Glutamine amidotransferase type-2 domain; it reads CGILGIVLAN…PGEAVIIPKN (238 aa). The Mg(2+) site is built by aspartate 373 and aspartate 374.

This sequence in the C-terminal section; belongs to the purine/pyrimidine phosphoribosyltransferase family. Mg(2+) serves as cofactor.

It catalyses the reaction 5-phospho-beta-D-ribosylamine + L-glutamate + diphosphate = 5-phospho-alpha-D-ribose 1-diphosphate + L-glutamine + H2O. Its pathway is purine metabolism; IMP biosynthesis via de novo pathway; N(1)-(5-phospho-D-ribosyl)glycinamide from 5-phospho-alpha-D-ribose 1-diphosphate: step 1/2. This Saccharomyces cerevisiae (strain ATCC 204508 / S288c) (Baker's yeast) protein is Amidophosphoribosyltransferase (ADE4).